Consider the following 142-residue polypeptide: Large ribosomal subunit protein uL13 (142 aa).

This sequence belongs to the universal ribosomal protein uL13 family. In terms of assembly, part of the 50S ribosomal subunit.

In terms of biological role, this protein is one of the early assembly proteins of the 50S ribosomal subunit, although it is not seen to bind rRNA by itself. It is important during the early stages of 50S assembly. This is Large ribosomal subunit protein uL13 from Proteus mirabilis (strain HI4320).